Reading from the N-terminus, the 141-residue chain is Putative pre-16S rRNA nuclease (141 aa).

It belongs to the YqgF nuclease family.

The protein localises to the cytoplasm. Functionally, could be a nuclease involved in processing of the 5'-end of pre-16S rRNA. The polypeptide is Putative pre-16S rRNA nuclease (Aliivibrio fischeri (strain MJ11) (Vibrio fischeri)).